We begin with the raw amino-acid sequence, 210 residues long: MHMIRRAAGALAVFAVAALAAAPAWAATAQEQLDTFVATVKGATGSFKQSTVSPQGATQPAQSGTFAFQRPGKFKWAVQLPYEQLIVSDGKQVFQYDPDLAQVTVRQVDQAIGTSPAAILFGAGQLGQAFAVSALPDRDGLQWLRAKPRNADAGFSQVDIGLRDNQPARIELVDAFGQTTRVELSNLLPGAVPASEFQFTPPQGVDVVKM.

A signal peptide spans 1–26 (MHMIRRAAGALAVFAVAALAAAPAWA).

It belongs to the LolA family. In terms of assembly, monomer.

It is found in the periplasm. Participates in the translocation of lipoproteins from the inner membrane to the outer membrane. Only forms a complex with a lipoprotein if the residue after the N-terminal Cys is not an aspartate (The Asp acts as a targeting signal to indicate that the lipoprotein should stay in the inner membrane). This is Outer-membrane lipoprotein carrier protein from Bordetella bronchiseptica (strain ATCC BAA-588 / NCTC 13252 / RB50) (Alcaligenes bronchisepticus).